A 312-amino-acid polypeptide reads, in one-letter code: Porphobilinogen deaminase (312 aa).

Cys-241 is modified (S-(dipyrrolylmethanemethyl)cysteine).

This sequence belongs to the HMBS family. As to quaternary structure, monomer. The cofactor is dipyrromethane.

The catalysed reaction is 4 porphobilinogen + H2O = hydroxymethylbilane + 4 NH4(+). Its pathway is porphyrin-containing compound metabolism; protoporphyrin-IX biosynthesis; coproporphyrinogen-III from 5-aminolevulinate: step 2/4. Tetrapolymerization of the monopyrrole PBG into the hydroxymethylbilane pre-uroporphyrinogen in several discrete steps. The sequence is that of Porphobilinogen deaminase from Cytophaga hutchinsonii (strain ATCC 33406 / DSM 1761 / CIP 103989 / NBRC 15051 / NCIMB 9469 / D465).